The primary structure comprises 120 residues: NAD(P)H-quinone oxidoreductase subunit 3 (120 aa).

A run of 3 helical transmembrane segments spans residues 10–30, 64–84, and 89–109; these read LLVF…ASAL, MFAL…PWAV, and LGLL…VGLV.

This sequence belongs to the complex I subunit 3 family. As to quaternary structure, NDH-1 can be composed of about 15 different subunits; different subcomplexes with different compositions have been identified which probably have different functions.

The protein localises to the cellular thylakoid membrane. It carries out the reaction a plastoquinone + NADH + (n+1) H(+)(in) = a plastoquinol + NAD(+) + n H(+)(out). The catalysed reaction is a plastoquinone + NADPH + (n+1) H(+)(in) = a plastoquinol + NADP(+) + n H(+)(out). In terms of biological role, NDH-1 shuttles electrons from an unknown electron donor, via FMN and iron-sulfur (Fe-S) centers, to quinones in the respiratory and/or the photosynthetic chain. The immediate electron acceptor for the enzyme in this species is believed to be plastoquinone. Couples the redox reaction to proton translocation, and thus conserves the redox energy in a proton gradient. Cyanobacterial NDH-1 also plays a role in inorganic carbon-concentration. This Synechococcus sp. (strain JA-2-3B'a(2-13)) (Cyanobacteria bacterium Yellowstone B-Prime) protein is NAD(P)H-quinone oxidoreductase subunit 3.